Here is a 132-residue protein sequence, read N- to C-terminus: Large ribosomal subunit protein bL20c (132 aa).

Belongs to the bacterial ribosomal protein bL20 family.

The protein localises to the plastid. The protein resides in the chloroplast. Functionally, binds directly to 23S ribosomal RNA and is necessary for the in vitro assembly process of the 50S ribosomal subunit. It is not involved in the protein synthesizing functions of that subunit. The sequence is that of Large ribosomal subunit protein bL20c from Coffea arabica (Arabian coffee).